The primary structure comprises 239 residues: Pyridoxine 5'-phosphate synthase (239 aa).

N7 is a 3-amino-2-oxopropyl phosphate binding site. A 1-deoxy-D-xylulose 5-phosphate-binding site is contributed by D9–H10. Residue R18 participates in 3-amino-2-oxopropyl phosphate binding. H43 acts as the Proton acceptor in catalysis. Residues R45 and H50 each coordinate 1-deoxy-D-xylulose 5-phosphate. The Proton acceptor role is filled by E70. Position 100 (T100) interacts with 1-deoxy-D-xylulose 5-phosphate. H191 functions as the Proton donor in the catalytic mechanism. 3-amino-2-oxopropyl phosphate is bound by residues G192 and G213–H214.

The protein belongs to the PNP synthase family. Homooctamer; tetramer of dimers.

The protein resides in the cytoplasm. The enzyme catalyses 3-amino-2-oxopropyl phosphate + 1-deoxy-D-xylulose 5-phosphate = pyridoxine 5'-phosphate + phosphate + 2 H2O + H(+). It functions in the pathway cofactor biosynthesis; pyridoxine 5'-phosphate biosynthesis; pyridoxine 5'-phosphate from D-erythrose 4-phosphate: step 5/5. Catalyzes the complicated ring closure reaction between the two acyclic compounds 1-deoxy-D-xylulose-5-phosphate (DXP) and 3-amino-2-oxopropyl phosphate (1-amino-acetone-3-phosphate or AAP) to form pyridoxine 5'-phosphate (PNP) and inorganic phosphate. In Geobacter metallireducens (strain ATCC 53774 / DSM 7210 / GS-15), this protein is Pyridoxine 5'-phosphate synthase.